Consider the following 348-residue polypeptide: Protein-arginine N-acetylglucosaminyltransferase SseK2 (348 aa).

Residues 64-66, Tyr88, and 237-240 contribute to the UDP-N-acetyl-alpha-D-glucosamine site; these read QWF and YLDA. A DXD motif motif is present at residues 239–241; that stretch reads DAD. A Mn(2+)-binding site is contributed by Asp241. Glu271 serves as the catalytic Proton acceptor. UDP-N-acetyl-alpha-D-glucosamine is bound by residues Asn338, Ser340, and 345–348; that span reads SSWR. Mn(2+)-binding residues include Asn338 and Ser340.

It belongs to the glycosyltransferase NleB family. The cofactor is Mn(2+).

The protein resides in the secreted. It localises to the host Golgi apparatus. The catalysed reaction is L-arginyl-[protein] + UDP-N-acetyl-alpha-D-glucosamine = N(omega)-(N-acetyl-beta-D-glucosaminyl)-L-arginyl-[protein] + UDP + H(+). With respect to regulation, protein-arginine N-acetylglucosaminyltransferase activity is inhibited by 100066N compound (flavone analog) and 102644N compound (a substituted isoxazole). Protein-arginine N-acetylglucosaminyltransferase effector that catalyzes the transfer of a single N-acetylglucosamine (GlcNAc) to a conserved arginine residue in the death domain of host proteins such as FADD: arginine GlcNAcylation prevents homotypic/heterotypic death domain interactions. Also acts on host proteins without a death domain: catalyzes arginine GlcNAcylation of host small Rab1 GTPase, thereby preventing GTPase activity and leading to impaired host vesicular protein transport. In contrast to Ssek1, not able to disrupt TNF signaling in infected cells. This Salmonella typhimurium (strain SL1344) protein is Protein-arginine N-acetylglucosaminyltransferase SseK2.